Consider the following 273-residue polypeptide: Ribosomal RNA small subunit methyltransferase A (273 aa).

S-adenosyl-L-methionine-binding residues include Asn18, Leu20, Gly45, Glu66, Asp91, and Asn113.

The protein belongs to the class I-like SAM-binding methyltransferase superfamily. rRNA adenine N(6)-methyltransferase family. RsmA subfamily.

The protein resides in the cytoplasm. The catalysed reaction is adenosine(1518)/adenosine(1519) in 16S rRNA + 4 S-adenosyl-L-methionine = N(6)-dimethyladenosine(1518)/N(6)-dimethyladenosine(1519) in 16S rRNA + 4 S-adenosyl-L-homocysteine + 4 H(+). Functionally, specifically dimethylates two adjacent adenosines (A1518 and A1519) in the loop of a conserved hairpin near the 3'-end of 16S rRNA in the 30S particle. May play a critical role in biogenesis of 30S subunits. The polypeptide is Ribosomal RNA small subunit methyltransferase A (Escherichia coli O1:K1 / APEC).